A 49-amino-acid chain; its full sequence is KLGDQRQIDIASWNTFDFGGVXKANANTGIGNVVIERTDNPNTVPYIPA.

The protein resides in the secreted. Its function is as follows. Very potent toxin that exhibits a wide range of toxicities over various organisms and cells including brine shrimp larvae (Artemia salina), sea hare eggs (Aplysia kurodai), mice, and cultured mammalian cells. An SOR-containing fraction cleaves plasmid DNA in a bivalent metal ion dependent manner suggesting genotoxicity of SOR. This Spongosorites sp. (strain QM G324170) (Okinawan marine Sponge) protein is Soritesidine.